A 771-amino-acid polypeptide reads, in one-letter code: Receptor like protein 22 (771 aa).

Residues 1-20 form the signal peptide; the sequence is MSNLRLRLLSLVSILYCIAA. The Extracellular portion of the chain corresponds to 21–729; sequence LRCRPDQTET…EEEEILEWRA (709 aa). 6 N-linked (GlcNAc...) asparagine glycosylation sites follow: Asn-46, Asn-58, Asn-80, Asn-93, Asn-134, and Asn-158. LRR repeat units lie at residues 86–110, 112–135, 136–159, 160–183, 185–206, 207–230, 232–254, 255–281, 283–303, 304–327, 329–350, and 353–377; these read LSHLRYLNLSFNNFDSSPLSSAFGQ, NNLEVLLLSSNGFTGQVPSSIRNL, TKLTQLNLPHNKLTGDLPSLVQNL, TKLLALDLSYNQFSGTIPSSFFTM, FLSYLDLSENHLTGSFEISNSS, SKLENLNLGNNHFETEIIDPVLRL, NLRYLSLSFLNTSHPIDLSIFSP, LQSLTHLDLHGNSLTLTSVYSDIDFPK, MEILLLSGCNISEFPRFLKSL, KKLWYLDLSSNRIKGNVPDWIWSL, LLVSLDLSNNSFTGFNGSLDHV, and NSSVQVLDIALNSFKGSFPNPPVSI. Asn-204 is a glycosylation site (N-linked (GlcNAc...) asparagine). A glycan (N-linked (GlcNAc...) asparagine) is linked at Asn-242. Asn-292 carries an N-linked (GlcNAc...) asparagine glycan. Residues Asn-337, Asn-344, Asn-353, Asn-379, Asn-384, Asn-397, Asn-410, Asn-421, Asn-466, and Asn-481 are each glycosylated (N-linked (GlcNAc...) asparagine). The LRR 13; degenerate repeat unit spans residues 378–397; it reads INLSAWNNSFTGDIPLSVCN. LRR repeat units lie at residues 398 to 419, 420 to 443, 445 to 467, 469 to 491, 492 to 516, 519 to 543, 588 to 612, 613 to 636, 637 to 660, and 662 to 685; these read RTSLDVLDLSYNNFTGSIPPCM, GNFTIVNLRKNKLEGNIPDEFYSG, LTQTLDVGYNQLTGELPRSLLNC, FIRFLSVDHNRINDSFPLWLKAL, PNLKVLTLRSNSFHGPMSPPDDQSS, FPKLQILEISHNRFTGSLPTNYFAN, LTFYSAIDFSGNKLEGEIPESIGLL, KTLIALNLSNNSFTGHIPMSFANV, TELESLDLSGNKLSGEIPQELGRL, and YLAYIDVSDNQLTGKIPQGTQIIG. The N-linked (GlcNAc...) asparagine glycan is linked to Asn-543. Residues Asn-619, Asn-622, and Asn-635 are each glycosylated (N-linked (GlcNAc...) asparagine). The chain crosses the membrane as a helical span at residues 730 to 750; that stretch reads AAIGYGPGVLFGLAIGHVVAL. Topologically, residues 751-771 are cytoplasmic; it reads YKPGWFIKNNGQNRLRGIRHP.

Belongs to the RLP family.

The protein resides in the cell membrane. The polypeptide is Receptor like protein 22 (Arabidopsis thaliana (Mouse-ear cress)).